Consider the following 273-residue polypeptide: MYNMYYCKRNKYISNYSFGKNNKGHITIKHRQGLFIKSSQLKNTNYNYIFKKNIFNIINYNNKKIIKLQILKKIIDYKLQKYIYKVICLNNSLNYQYKYLPITKNTKEGDIIYIGETIELKIGNILPIKKIPCGSWIHNIEHNPTKGAVFVKNSKISAFLIYIGKKYVTIKLPSGEIRLLNKNVFCILGELNIIPLFLKKNKAGFNRLLGKRPKVRGVAMNACDHPHGGGEGKNSIGRSSVYSPWGTISKGIITRKSKKYSKKLILKNRKKND.

The protein belongs to the universal ribosomal protein uL2 family. Part of the 50S ribosomal subunit.

It is found in the plastid. The protein resides in the apicoplast. This chain is Large ribosomal subunit protein uL2c (rpl2), found in Eimeria tenella (Coccidian parasite).